Here is an 863-residue protein sequence, read N- to C-terminus: DNA ligase (863 aa).

NAD(+) contacts are provided by residues 76-80 (DAAYD), 125-126 (SL), and Glu159. Residue Lys161 is the N6-AMP-lysine intermediate of the active site. Residues Arg182 and Glu221 each coordinate NAD(+). The tract at residues 237–256 (EDAGRPPFANPRNAAAGSLR) is disordered. Over residues 241–253 (RPPFANPRNAAAG) the composition is skewed to low complexity. Positions 346 and 370 each coordinate NAD(+). Zn(2+) is bound by residues Cys467, Cys470, Cys486, and Cys492. Residues 781-863 (GLPQTLEGKS…DTLLATGDVQ (83 aa)) enclose the BRCT domain.

This sequence belongs to the NAD-dependent DNA ligase family. LigA subfamily. It depends on Mg(2+) as a cofactor. Requires Mn(2+) as cofactor.

The catalysed reaction is NAD(+) + (deoxyribonucleotide)n-3'-hydroxyl + 5'-phospho-(deoxyribonucleotide)m = (deoxyribonucleotide)n+m + AMP + beta-nicotinamide D-nucleotide.. In terms of biological role, DNA ligase that catalyzes the formation of phosphodiester linkages between 5'-phosphoryl and 3'-hydroxyl groups in double-stranded DNA using NAD as a coenzyme and as the energy source for the reaction. It is essential for DNA replication and repair of damaged DNA. This is DNA ligase from Bifidobacterium animalis subsp. lactis (strain AD011).